The primary structure comprises 261 residues: Small ribosomal subunit protein uS2 (261 aa).

The protein belongs to the universal ribosomal protein uS2 family.

The chain is Small ribosomal subunit protein uS2 from Rhodospirillum centenum (strain ATCC 51521 / SW).